The chain runs to 399 residues: uncharacterized protein (399 aa).

10 helical membrane passes run 7 to 27 (FSAL…LYLI), 33 to 53 (FLQI…FEVP), 79 to 99 (AFFP…IWAL), 131 to 151 (LLIT…SLNI), 153 to 173 (FPFL…SVFI), 208 to 228 (VLLI…ISRY), 242 to 262 (SLGY…TLTI), 296 to 316 (PLGI…HPIV), 335 to 355 (LNSG…GIIS), and 357 to 377 (AFGL…PIIL).

Belongs to the major facilitator superfamily. Drug:H(+) antiporter-3 (DHA3) (TC 2.A.1.21) family.

It localises to the cell membrane. This is an uncharacterized protein from Bacillus subtilis (strain 168).